The chain runs to 242 residues: Myogenic factor 6 (242 aa).

Residues 31-63 (SPLYPGSDGTLSPCQDQMPQEAGSDSSGEEHVL) are disordered. The span at 39 to 56 (GTLSPCQDQMPQEAGSDS) shows a compositional bias: polar residues. One can recognise a bHLH domain in the interval 93–144 (DRRKAATLRERRRLKKINEAFEALKRRTVANPNQRLPKVEILRSAISYIERL).

Efficient DNA binding requires dimerization with another bHLH protein. Interacts with CSRP3. Skeletal muscle.

The protein resides in the nucleus. Involved in muscle differentiation (myogenic factor). Induces fibroblasts to differentiate into myoblasts. Probable sequence specific DNA-binding protein. The chain is Myogenic factor 6 (Myf6) from Mus musculus (Mouse).